Here is a 574-residue protein sequence, read N- to C-terminus: DNA-directed primase/polymerase protein (574 aa).

Positions 2-22 form a coiled coil; sequence KRKWEERVKKVEELASYYERN. Substrate contacts are provided by residues R76, 116-118, 167-171, 291-294, and K300; these read DLE, KFSRH, and RNFR. Residues D116 and E118 each contribute to the Mn(2+) site. Zn(2+) contacts are provided by C424, H431, C451, and C456. The Zinc knuckle motif motif lies at 424 to 457; that stretch reads CENIGRAHRSNNIMILVDLKKEVWYQKCHDPVCR.

The protein belongs to the eukaryotic-type primase small subunit family. Mn(2+) serves as cofactor.

It localises to the nucleus. The protein resides in the mitochondrion matrix. The protein localises to the chromosome. It catalyses the reaction ssDNA + n NTP = ssDNA/pppN(pN)n-1 hybrid + (n-1) diphosphate.. It carries out the reaction DNA(n) + a 2'-deoxyribonucleoside 5'-triphosphate = DNA(n+1) + diphosphate. Its function is as follows. DNA primase and DNA polymerase required to tolerate replication-stalling lesions by bypassing them. Required to facilitate mitochondrial and nuclear replication fork progression by initiating de novo DNA synthesis using dNTPs and acting as an error-prone DNA polymerase able to bypass certain DNA lesions. Shows a high capacity to tolerate DNA damage lesions such as 8oxoG and abasic sites in DNA. Provides different translesion synthesis alternatives when DNA replication is stalled: able to synthesize DNA primers downstream of lesions, such as UV lesions, R-loops and G-quadruplexes, to allow DNA replication to continue. Can also realign primers ahead of 'unreadable lesions' such as abasic sites and 6-4 photoproduct (6-4 pyrimidine-pyrimidinone), thereby skipping the lesion. Repriming avoids fork degradation while leading to accumulation of internal ssDNA gaps behind the forks. Also able to incorporate nucleotides opposite DNA lesions such as 8oxoG, like a regular translesion synthesis DNA polymerase. Also required for reinitiating stalled forks after ultraviolet (UV) damage during nuclear DNA replication. Required for mitochondrial DNA (mtDNA) synthesis and replication, by reinitiating synthesis after UV damage or in the presence of chain-terminating nucleotides. In addition to its role in DNA damage response, also required to maintain efficient nuclear and mitochondrial DNA replication in unperturbed cells. The protein is DNA-directed primase/polymerase protein of Gallus gallus (Chicken).